Reading from the N-terminus, the 243-residue chain is Phosphatidylserine decarboxylase proenzyme (243 aa).

The active-site Schiff-base intermediate with substrate; via pyruvic acid is Ser212. At Ser212 the chain carries Pyruvic acid (Ser); by autocatalysis.

It belongs to the phosphatidylserine decarboxylase family. PSD-A subfamily. As to quaternary structure, heterodimer of a large membrane-associated beta subunit and a small pyruvoyl-containing alpha subunit. It depends on pyruvate as a cofactor. Is synthesized initially as an inactive proenzyme. Formation of the active enzyme involves a self-maturation process in which the active site pyruvoyl group is generated from an internal serine residue via an autocatalytic post-translational modification. Two non-identical subunits are generated from the proenzyme in this reaction, and the pyruvate is formed at the N-terminus of the alpha chain, which is derived from the carboxyl end of the proenzyme. The post-translation cleavage follows an unusual pathway, termed non-hydrolytic serinolysis, in which the side chain hydroxyl group of the serine supplies its oxygen atom to form the C-terminus of the beta chain, while the remainder of the serine residue undergoes an oxidative deamination to produce ammonia and the pyruvoyl prosthetic group on the alpha chain.

The protein resides in the cell membrane. It carries out the reaction a 1,2-diacyl-sn-glycero-3-phospho-L-serine + H(+) = a 1,2-diacyl-sn-glycero-3-phosphoethanolamine + CO2. It functions in the pathway phospholipid metabolism; phosphatidylethanolamine biosynthesis; phosphatidylethanolamine from CDP-diacylglycerol: step 2/2. Functionally, catalyzes the formation of phosphatidylethanolamine (PtdEtn) from phosphatidylserine (PtdSer). The sequence is that of Phosphatidylserine decarboxylase proenzyme from Mycobacterium leprae (strain Br4923).